We begin with the raw amino-acid sequence, 246 residues long: Dihydromethanopterin reductase (acceptor) (246 aa).

4Fe-4S ferredoxin-type domains lie at 150-178 (LPYA…VKRD) and 179-208 (NFVE…EGKE). The [4Fe-4S] cluster site is built by C159, C162, C165, C169, C188, C191, C194, and C198.

Homodimer. It depends on [4Fe-4S] cluster as a cofactor.

The enzyme catalyses 5,6,7,8-tetrahydromethanopterin + A = 7,8-dihydromethanopterin + AH2. Its pathway is cofactor biosynthesis; 5,6,7,8-tetrahydromethanopterin biosynthesis. In terms of biological role, involved in the biosynthesis of tetrahydromethanopterin, a coenzyme used in methanogenesis. Catalyzes the reduction of dihydromethanopterin (H(2)MPT) to tetrahydromethanopterin (H(4)MPT). Ferredoxin may serve as an electron donor. The chain is Dihydromethanopterin reductase (acceptor) from Methanocaldococcus jannaschii (strain ATCC 43067 / DSM 2661 / JAL-1 / JCM 10045 / NBRC 100440) (Methanococcus jannaschii).